The sequence spans 675 residues: Putative elongation factor TypA-like SVR3, chloroplastic (675 aa).

Residues 1-58 constitute a chloroplast transit peptide; sequence MELSLSTSSASPAVLRRQASPLLHKQQVLGVSFASALKPGGGALRFPSRRPLPRPITC. The tract at residues 43–76 is disordered; it reads ALRFPSRRPLPRPITCSASPSTAEPASEVKKKQL. Over residues 59–68 the composition is skewed to low complexity; sequence SASPSTAEPA. In terms of domain architecture, tr-type G spans 80–275; it reads DNVRNIAIVA…AIIRCVPGPN (196 aa).

Belongs to the TRAFAC class translation factor GTPase superfamily. Classic translation factor GTPase family. BipA subfamily.

It localises to the plastid. It is found in the chloroplast. In terms of biological role, putative chloroplastic elongation factor involved in response to chilling stress. Required for proper chloroplast rRNA processing and/or translation at low temperature. Involved in plastid protein homeostasis. The polypeptide is Putative elongation factor TypA-like SVR3, chloroplastic (SVR3) (Arabidopsis thaliana (Mouse-ear cress)).